The following is a 293-amino-acid chain: MKGTQTKEKQRVALVIQYLGSRFHGWQWQPNQRTVQAEIENAIAEVLGETVTLHGAGRTDAGVHAAAQVAHFDMVSPIPASRWVDILNARLPEDILIRGSAQVPLTWHARFSAQWRRYRYTFYTEQRPNLFVKPYSWHYYHFPLDESLMQQALNPLLGRHHLAAFHRAGSRRDHSWVEVQSTHCHRQGPFIHLEIQANGFLYGMVRLLVGLLVEVGSGKRSLENFTEIWRKQQREAVKYAAPAKGLCLLRVGYEEFPFPPSLWFDSQPLFLFNQVLDSSLSFPNQSLPYGMTS.

Aspartate 60 functions as the Nucleophile in the catalytic mechanism. Residue tyrosine 118 participates in substrate binding.

Belongs to the tRNA pseudouridine synthase TruA family. In terms of assembly, homodimer.

The catalysed reaction is uridine(38/39/40) in tRNA = pseudouridine(38/39/40) in tRNA. Functionally, formation of pseudouridine at positions 38, 39 and 40 in the anticodon stem and loop of transfer RNAs. The protein is tRNA pseudouridine synthase A of Rippkaea orientalis (strain PCC 8801 / RF-1) (Cyanothece sp. (strain PCC 8801)).